Reading from the N-terminus, the 140-residue chain is Nucleoside diphosphate kinase (140 aa).

Residues K11, F59, R87, T93, R104, and N114 each contribute to the ATP site. H117 acts as the Pros-phosphohistidine intermediate in catalysis.

Belongs to the NDK family. Homotetramer. Mg(2+) is required as a cofactor.

It localises to the cytoplasm. It carries out the reaction a 2'-deoxyribonucleoside 5'-diphosphate + ATP = a 2'-deoxyribonucleoside 5'-triphosphate + ADP. It catalyses the reaction a ribonucleoside 5'-diphosphate + ATP = a ribonucleoside 5'-triphosphate + ADP. Functionally, major role in the synthesis of nucleoside triphosphates other than ATP. The ATP gamma phosphate is transferred to the NDP beta phosphate via a ping-pong mechanism, using a phosphorylated active-site intermediate. The protein is Nucleoside diphosphate kinase of Rickettsia canadensis (strain McKiel).